The primary structure comprises 926 residues: MNYKDTLNLPKTDFPMKAKLPSREPEFLQEWESNNLYQRVQQKRSGKPKYILHDGPPYANGNIHMGHALNKVLKDIVVKFKTMQGYDSPYVPGWDTHGLPIEHQITKTEKVDRKSMSDVEFRKKCHDYAMKYVEIQKEEFKRLGVRGDWDNPYLTLSPEFEAEQVKLFGEMAQKGYIYKGLKPVYWCTDCETALAEAEVEYHDKRSPSIYVGFHVKDSKGEFNEEGVEFIIWTTTPWTIPANMAIALHPEFQYSLIKSGEKHYIVATDLLETVAEEAKLGEYQIIREYTGRELEGIVCQHPLFDSRESLVILGDHVTLEQGTGCVHTAPGHGHEDYEVAQKYDLEVLSPLNDSGVFTEEAGQFQGLYYDKANKEITQALDKRGALLSLSFITHQYPCCWRCKESVIFRATEQWFASVDGFRQDALKAIEDVDWIPAWGEERIKAMVMNRGDWCISRQRVWGVPLPIFYCQECGHELITEESISAVAELFRQEGSDAWFEKEAPEILPQGIQCSCGAKKFSKETDIMDVWFDSGSTHRGVCAQRQELAWPVDLYLEGSDQYRGWFQSSLLTAVATKGESPYRECLTNGWVVDGEGKKMSKSQGNVIAPQDITNQYGADILRLWVASSEFKQDVRVSQKILKQTAEAYRKIRNTARFILGNLYDFTPEKDYVSFDQLEEIDSYILCRLQKVIDQATRAYDEFEFHEFYHLIHNFCVVELSQFYLDVIKDRIYTMPTESRERRAAQTTMYYLLDSLVKMLAPVLTFTSEEIWQYLPGDREESIQLTDWPEVNEELVDNELEQKWANFLEFRKEVAKALENARKDKKIGSSLESKILIYADEDLFKKLQSFEDNLEELFIVSQVELKKAEQLTETVKNQALSSEDVEQASIIIEAAQGEKCPRCWNYHPEVTKAEELCPRCSHVLETSNK.

Positions 57–67 (PYANGNIHMGH) match the 'HIGH' region motif. Residue glutamate 555 coordinates L-isoleucyl-5'-AMP. Residues 596-600 (KMSKS) carry the 'KMSKS' region motif. Position 599 (lysine 599) interacts with ATP. The Zn(2+) site is built by cysteine 897, cysteine 900, cysteine 914, and cysteine 917.

This sequence belongs to the class-I aminoacyl-tRNA synthetase family. IleS type 1 subfamily. As to quaternary structure, monomer. Requires Zn(2+) as cofactor.

The protein localises to the cytoplasm. The enzyme catalyses tRNA(Ile) + L-isoleucine + ATP = L-isoleucyl-tRNA(Ile) + AMP + diphosphate. Functionally, catalyzes the attachment of isoleucine to tRNA(Ile). As IleRS can inadvertently accommodate and process structurally similar amino acids such as valine, to avoid such errors it has two additional distinct tRNA(Ile)-dependent editing activities. One activity is designated as 'pretransfer' editing and involves the hydrolysis of activated Val-AMP. The other activity is designated 'posttransfer' editing and involves deacylation of mischarged Val-tRNA(Ile). The sequence is that of Isoleucine--tRNA ligase from Natranaerobius thermophilus (strain ATCC BAA-1301 / DSM 18059 / JW/NM-WN-LF).